Consider the following 443-residue polypeptide: Probable glycine dehydrogenase (decarboxylating) subunit 1 (443 aa).

It belongs to the GcvP family. N-terminal subunit subfamily. In terms of assembly, the glycine cleavage system is composed of four proteins: P, T, L and H. In this organism, the P 'protein' is a heterodimer of two subunits.

It catalyses the reaction N(6)-[(R)-lipoyl]-L-lysyl-[glycine-cleavage complex H protein] + glycine + H(+) = N(6)-[(R)-S(8)-aminomethyldihydrolipoyl]-L-lysyl-[glycine-cleavage complex H protein] + CO2. Functionally, the glycine cleavage system catalyzes the degradation of glycine. The P protein binds the alpha-amino group of glycine through its pyridoxal phosphate cofactor; CO(2) is released and the remaining methylamine moiety is then transferred to the lipoamide cofactor of the H protein. The protein is Probable glycine dehydrogenase (decarboxylating) subunit 1 of Solidesulfovibrio magneticus (strain ATCC 700980 / DSM 13731 / RS-1) (Desulfovibrio magneticus).